Reading from the N-terminus, the 533-residue chain is MKTPTIPTLLGPDGMTSLREYAGYHGGGSGFGGQLRSWNPPSESVDAALLPNFTRGNARADDLVRNNGYAANAIQLHQDHIVGSFFRLSHRPSWRYLGIGEEEARAFSREVEAAWKEFAEDDCCCIDVERKRTFTMMIREGVAMHAFNGELFVQATWDTSSSRLFRTQFRMVSPKRISNPNNTGDSRNCRAGVQINDSGAALGYYVSEDGYPGWMPQKWTWIPRELPGGRASFIHVFEPVEDGQTRGANVFYSVMEQMKMLDTLQNTQLQSAIVKAMYAATIESELDTQSAMDFILGANSQEQRERLTGWIGEIAAYYAAAPVRLGGAKVPHLMPGDSLNLQTAQDTDNGYSVFEQSLLRYIAAGLGVSYEQLSRNYAQMSYSTARASANESWAYFMGRRKFVASRQASQMFLCWLEEAIVRRVVTLPSKARFSFQEARSAWGNCDWIGSGRMAIDGLKEVQEAVMLIEAGLSTYEKECAKRGDDYQEIFAQQVRETMERRAAGLKPPAWAAAAFESGLRQSTEEEKSDSRAA.

The protein belongs to the siphoviridae portal protein family. In terms of assembly, homododecamer. Interacts with the terminase complex composed of two small and one large terminase subunits. Post-translationally, proteolytically cleaved by the viral protease during capsid maturation.

The protein localises to the virion. Its function is as follows. Forms the portal vertex of the capsid. This portal plays critical roles in head assembly, genome packaging, neck/tail attachment, and genome ejection. The portal protein multimerizes as a single ring-shaped homododecamer arranged around a central channel. Binds to the terminase subunits to form the packaging machine. This chain is Portal protein B, found in Escherichia phage lambda (Bacteriophage lambda).